Consider the following 213-residue polypeptide: Thymidylate kinase (213 aa).

10 to 17 (GLEGAGKT) contacts ATP.

Belongs to the thymidylate kinase family.

It carries out the reaction dTMP + ATP = dTDP + ADP. Its function is as follows. Phosphorylation of dTMP to form dTDP in both de novo and salvage pathways of dTTP synthesis. This Escherichia coli O6:K15:H31 (strain 536 / UPEC) protein is Thymidylate kinase.